A 478-amino-acid chain; its full sequence is Phenylalanine--tRNA ligase alpha subunit (478 aa).

Residues Thr-318, 357–359, and Tyr-397 contribute to the L-phenylalanine site; that span reads QLE. A Mg(2+)-binding site is contributed by Glu-399. Phe-422 serves as a coordination point for L-phenylalanine.

It belongs to the class-II aminoacyl-tRNA synthetase family. Phe-tRNA synthetase alpha subunit type 2 subfamily. Tetramer of two alpha and two beta subunits. It depends on Mg(2+) as a cofactor.

It is found in the cytoplasm. It catalyses the reaction tRNA(Phe) + L-phenylalanine + ATP = L-phenylalanyl-tRNA(Phe) + AMP + diphosphate + H(+). The sequence is that of Phenylalanine--tRNA ligase alpha subunit from Methanospirillum hungatei JF-1 (strain ATCC 27890 / DSM 864 / NBRC 100397 / JF-1).